A 1516-amino-acid chain; its full sequence is Mediator of RNA polymerase II transcription subunit 14 (1516 aa).

2 disordered regions span residues 22–98 and 1434–1516; these read LSSQ…EVPA and MHRQ…YPPQ. Positions 34-47 are enriched in low complexity; the sequence is SPAAPISPAPSGSA. A compositionally biased stretch (basic and acidic residues) spans 72–83; that stretch reads SEVDVKSIHSSD. Residues 1463–1473 show a composition bias toward low complexity; it reads SHQQHMMNPGS. Positions 1474–1483 are enriched in gly residues; sequence VGPGSVGGPG. The segment covering 1502–1516 has biased composition (low complexity); that stretch reads QSYHHPLHHQQYPPQ.

This sequence belongs to the Mediator complex subunit 14 family. As to quaternary structure, component of the Mediator complex.

The protein localises to the nucleus. Functionally, component of the Mediator complex, a coactivator involved in the regulated transcription of nearly all RNA polymerase II-dependent genes. Mediator functions as a bridge to convey information from gene-specific regulatory proteins to the basal RNA polymerase II transcription machinery. Mediator is recruited to promoters by direct interactions with regulatory proteins and serves as a scaffold for the assembly of a functional preinitiation complex with RNA polymerase II and the general transcription factors. Required for transcription in the embryo and for phosphorylation of the RNA polymerase II C-terminal domain repeat. This is Mediator of RNA polymerase II transcription subunit 14 (rgr-1) from Caenorhabditis elegans.